The following is a 103-amino-acid chain: Small integral membrane protein 32 (103 aa).

The helical transmembrane segment at 55 to 75 threads the bilayer; it reads YLLLFFLLLLSVALVVLFIGC.

It is found in the membrane. In Homo sapiens (Human), this protein is Small integral membrane protein 32.